We begin with the raw amino-acid sequence, 425 residues long: MLVTNKVEKLEGKMTVPGDKSISHRAIMLSSISKGTSRVKGFLRGEDCLSTISCFRDLGIDIEDRGTEIIIQGKGLHGLSEPLNVLDAGNSGTTIRLISGILAGQKFLTIVTGDASLRKRPMERIATPLRKMGAFIEGRDYGNLAPLVIRGGNLKGMDYASPVSSAQVKSAILLAGLYGEGDTIVREKITSRDHTEKMLKGLGANISTDQGVTRLGKSELYGQSIEVPGDISSAAFFMAGAAALPGSFLITEGVGLNPTRTGIIDVLRDMGGDIEIHNLRQSGGEEIGDIMIRGKKLYGTEIGKEIIPRLIDEIPVLAIIAATAEGKTIITGAEELKVKESNRITAMVTEMQKVGIKVTELPDGMEIEGGQVITGGRVESYGDHRIAMAMAICGLFAQEPIKINDSQCIDISFPNFEEKLKAVVR.

The 3-phosphoshikimate site is built by lysine 20, serine 21, and arginine 25. Lysine 20 lines the phosphoenolpyruvate pocket. Glycine 92 and arginine 120 together coordinate phosphoenolpyruvate. Residues serine 165, glutamine 167, aspartate 312, and lysine 339 each contribute to the 3-phosphoshikimate site. Glutamine 167 serves as a coordination point for phosphoenolpyruvate. Aspartate 312 serves as the catalytic Proton acceptor. Phosphoenolpyruvate is bound by residues arginine 343 and arginine 385.

It belongs to the EPSP synthase family. Monomer.

Its subcellular location is the cytoplasm. The catalysed reaction is 3-phosphoshikimate + phosphoenolpyruvate = 5-O-(1-carboxyvinyl)-3-phosphoshikimate + phosphate. It participates in metabolic intermediate biosynthesis; chorismate biosynthesis; chorismate from D-erythrose 4-phosphate and phosphoenolpyruvate: step 6/7. Catalyzes the transfer of the enolpyruvyl moiety of phosphoenolpyruvate (PEP) to the 5-hydroxyl of shikimate-3-phosphate (S3P) to produce enolpyruvyl shikimate-3-phosphate and inorganic phosphate. The chain is 3-phosphoshikimate 1-carboxyvinyltransferase from Alkaliphilus metalliredigens (strain QYMF).